The sequence spans 544 residues: Chitin-inducible gibberellin-responsive protein 2 (544 aa).

Residues 1–123 form a disordered region; it reads MADTPTSRMI…VGASCVTEDP (123 aa). Composition is skewed to polar residues over residues 15–30, 63–74, and 86–101; these read NIPS…SDNP, SQATPNKYTLDS, and PSSQ…PLSQ. A GRAS domain is found at 165-544; sequence RMMGIPRGNL…RPLVVSSAWH (380 aa). Residues 172-232 are leucine repeat I (LRI); it reads GNLKELLIAC…VARLASSGIS (61 aa). The segment at 251–316 is VHIID; sequence MHFLYEACPY…GGPPTVRITG (66 aa). The short motif at 282–286 is the VHIID element; it reads IHIID. The leucine repeat II (LRII) stretch occupies residues 332–364; it reads LVGRRLSHIASLCKVPFEFHPLAISGSKVEAAH. Residues 373–467 form a PFYRE region; that stretch reads LAVNFTLELH…QHCLAREIVN (95 aa). An SAW region spans residues 470-544; the sequence is ACEGEERAER…RPLVVSSAWH (75 aa).

The protein belongs to the GRAS family.

It is found in the nucleus. Functionally, may play a regulatory role in the early step of oligosaccharide elicitor response, downstream of the membrane-associated high-affinity chitin-binding protein. This is Chitin-inducible gibberellin-responsive protein 2 (CIGR2) from Oryza sativa subsp. japonica (Rice).